A 158-amino-acid polypeptide reads, in one-letter code: Ribonuclease H (158 aa).

Residues 3–144 (GLKQLLIFTD…CDTLAREAAE (142 aa)) form the RNase H type-1 domain. The Mg(2+) site is built by D12, E50, D72, and D136.

Belongs to the RNase H family. Monomer. Mg(2+) is required as a cofactor.

The protein localises to the cytoplasm. The enzyme catalyses Endonucleolytic cleavage to 5'-phosphomonoester.. Functionally, endonuclease that specifically degrades the RNA of RNA-DNA hybrids. In Shewanella loihica (strain ATCC BAA-1088 / PV-4), this protein is Ribonuclease H.